A 348-amino-acid chain; its full sequence is Alcohol dehydrogenase 1 (348 aa).

Residues Cys44, His67, Cys98, Cys101, Cys104, Cys112, and Cys154 each contribute to the Zn(2+) site. NAD(+) is bound by residues 178 to 184 (GAGGGLG), Asp202, Lys207, 269 to 271 (VGL), and Arg341.

It belongs to the zinc-containing alcohol dehydrogenase family. As to quaternary structure, homotetramer. Zn(2+) serves as cofactor.

It is found in the cytoplasm. It catalyses the reaction a primary alcohol + NAD(+) = an aldehyde + NADH + H(+). The enzyme catalyses a secondary alcohol + NAD(+) = a ketone + NADH + H(+). Converts ethanol to acetaldehyde and plays a major role in xylose fermentation. The sequence is that of Alcohol dehydrogenase 1 (ADH1) from Scheffersomyces stipitis (strain ATCC 58785 / CBS 6054 / NBRC 10063 / NRRL Y-11545) (Yeast).